The sequence spans 273 residues: Large ribosomal subunit protein uL2 (273 aa).

Disordered stretches follow at residues 32–53 (PLVE…TTRH) and 221–273 (RGTA…RRSK). The span at 39-48 (KSGGRNNNGR) shows a compositional bias: low complexity.

The protein belongs to the universal ribosomal protein uL2 family. As to quaternary structure, part of the 50S ribosomal subunit. Forms a bridge to the 30S subunit in the 70S ribosome.

Its function is as follows. One of the primary rRNA binding proteins. Required for association of the 30S and 50S subunits to form the 70S ribosome, for tRNA binding and peptide bond formation. It has been suggested to have peptidyltransferase activity; this is somewhat controversial. Makes several contacts with the 16S rRNA in the 70S ribosome. This chain is Large ribosomal subunit protein uL2, found in Erwinia tasmaniensis (strain DSM 17950 / CFBP 7177 / CIP 109463 / NCPPB 4357 / Et1/99).